The following is a 436-amino-acid chain: Aminopeptidase C (436 aa).

Active-site residues include C68, H356, and N378.

The protein belongs to the peptidase C1 family. In terms of assembly, homohexamer.

The enzyme catalyses Inactivates bleomycin B2 (a cytotoxic glycometallopeptide) by hydrolysis of a carboxyamide bond of beta-aminoalanine, but also shows general aminopeptidase activity. The specificity varies somewhat with source, but amino acid arylamides of Met, Leu and Ala are preferred.. Its function is as follows. Hydrolyzes naphthylamide-substituted amino acids as well as di- and tripeptides in which the half-cystine residue is involved in a disulfide loop, notably in oxytocin and vasopressin. Also has a bleomycin hydrolase activity. The sequence is that of Aminopeptidase C (pepC) from Lactococcus lactis subsp. cremoris (Streptococcus cremoris).